Reading from the N-terminus, the 423-residue chain is Amino sugar nitrososynthase RubN8 (423 aa).

The protein belongs to the acyl-CoA dehydrogenase family. The cofactor is FAD.

It functions in the pathway antibiotic biosynthesis. Its function is as follows. Nitrososynthase involved in the biosynthesis of rubradirin, an ansamycin antibiotic. In vitro, catalyzes the double-oxidation of TDP-L-epi-vancosamine to TDP-L-epi-vancosonitrose. In vivo, probably catalyzes the formation of D-rubranitrose, the nitro sugar moiety of rubradirin. The sequence is that of Amino sugar nitrososynthase RubN8 from Streptomyces rubradiris (Streptomyces achromogenes subsp. rubradiris).